The sequence spans 237 residues: MIYAEILAGGKGSRMGNVNMPKQFLPLNKRPIIIHTVEKFLLNDRFDKILIVSPKEWINHTKDILKKFIGQDDRLVVVEGGSDRNESIMSGIRYIEKEFGIQDNDVIITHDSVRPFLTHRIIDENIDAVLQYGAVDTVISAIDTIIASEDQEFISDIPVRDNMYQGQTPQSFRISKLVELYNKLSDEQKAVLTDACKICSLAGEKVKLVRGEVFNIKVTTPYDLKVANAILQERISQ.

Residues 7–10, 81–87, and Ser-112 each bind CTP; these read LAGG and GSDRNES.

Belongs to the IspD/TarI cytidylyltransferase family. TarI subfamily.

The enzyme catalyses D-ribitol 5-phosphate + CTP + H(+) = CDP-L-ribitol + diphosphate. The protein operates within cell wall biogenesis; poly(ribitol phosphate) teichoic acid biosynthesis. Functionally, catalyzes the transfer of the cytidylyl group of CTP to D-ribitol 5-phosphate. In Bacillus spizizenii (strain ATCC 23059 / NRRL B-14472 / W23) (Bacillus subtilis subsp. spizizenii), this protein is Ribitol-5-phosphate cytidylyltransferase.